We begin with the raw amino-acid sequence, 193 residues long: MIGRIAGTLIEKNPPHLLVDCHGVGYEIDVPMSTFYNLPATGEKVALLTQQIVREDAHLLYGFGTAAERETFRQLIKISGIGARIALAVLSGMSVAELAQAVTLQEAGRLTRIPGIGKKTAERLLLELKGKLGADLGTVPGGPAVSDDAVDVLNALLALGYSDKEAAQAIKQVPAGTGVSEGIKLALKALSKG.

Residues Met1 to Gly64 form a domain I region. Residues Thr65 to Pro143 form a domain II region. The interval Ala144–Asp151 is flexible linker. Residues Asp151–Gly193 are domain III.

The protein belongs to the RuvA family. Homotetramer. Forms an RuvA(8)-RuvB(12)-Holliday junction (HJ) complex. HJ DNA is sandwiched between 2 RuvA tetramers; dsDNA enters through RuvA and exits via RuvB. An RuvB hexamer assembles on each DNA strand where it exits the tetramer. Each RuvB hexamer is contacted by two RuvA subunits (via domain III) on 2 adjacent RuvB subunits; this complex drives branch migration. In the full resolvosome a probable DNA-RuvA(4)-RuvB(12)-RuvC(2) complex forms which resolves the HJ.

Its subcellular location is the cytoplasm. In terms of biological role, the RuvA-RuvB-RuvC complex processes Holliday junction (HJ) DNA during genetic recombination and DNA repair, while the RuvA-RuvB complex plays an important role in the rescue of blocked DNA replication forks via replication fork reversal (RFR). RuvA specifically binds to HJ cruciform DNA, conferring on it an open structure. The RuvB hexamer acts as an ATP-dependent pump, pulling dsDNA into and through the RuvAB complex. HJ branch migration allows RuvC to scan DNA until it finds its consensus sequence, where it cleaves and resolves the cruciform DNA. The polypeptide is Holliday junction branch migration complex subunit RuvA (Ralstonia nicotianae (strain ATCC BAA-1114 / GMI1000) (Ralstonia solanacearum)).